The following is a 289-amino-acid chain: Glycine--tRNA ligase alpha subunit (289 aa).

The protein belongs to the class-II aminoacyl-tRNA synthetase family. In terms of assembly, tetramer of two alpha and two beta subunits.

It localises to the cytoplasm. It carries out the reaction tRNA(Gly) + glycine + ATP = glycyl-tRNA(Gly) + AMP + diphosphate. This Prochlorococcus marinus (strain MIT 9515) protein is Glycine--tRNA ligase alpha subunit.